Consider the following 173-residue polypeptide: uncharacterized protein (173 aa).

Residues 80 to 107 are disordered; the sequence is HSATVKRTDSSHRLKSHVVDKRPRRSLD. Basic and acidic residues predominate over residues 85–107; the sequence is KRTDSSHRLKSHVVDKRPRRSLD.

This is an uncharacterized protein from Autographa californica nuclear polyhedrosis virus (AcMNPV).